Consider the following 338-residue polypeptide: Lipoate-protein ligase A (338 aa).

Positions 29 to 216 (PATQRVLFLW…AFFVHYGERV (188 aa)) constitute a BPL/LPL catalytic domain. Residues Arg71, 76 to 79 (GAVF), and Lys134 each bind ATP. Lys134 is a binding site for (R)-lipoate.

It belongs to the LplA family. In terms of assembly, monomer.

The protein resides in the cytoplasm. The catalysed reaction is L-lysyl-[lipoyl-carrier protein] + (R)-lipoate + ATP = N(6)-[(R)-lipoyl]-L-lysyl-[lipoyl-carrier protein] + AMP + diphosphate + H(+). It functions in the pathway protein modification; protein lipoylation via exogenous pathway; protein N(6)-(lipoyl)lysine from lipoate: step 1/2. Its pathway is protein modification; protein lipoylation via exogenous pathway; protein N(6)-(lipoyl)lysine from lipoate: step 2/2. Its function is as follows. Catalyzes both the ATP-dependent activation of exogenously supplied lipoate to lipoyl-AMP and the transfer of the activated lipoyl onto the lipoyl domains of lipoate-dependent enzymes. The sequence is that of Lipoate-protein ligase A from Salmonella newport (strain SL254).